The chain runs to 89 residues: Large ribosomal subunit protein uL29c (89 aa).

The protein belongs to the universal ribosomal protein uL29 family.

It is found in the plastid. The protein localises to the chloroplast. This Trieres chinensis (Marine centric diatom) protein is Large ribosomal subunit protein uL29c (rpl29).